The following is a 631-amino-acid chain: Transmembrane and coiled-coil domain-containing protein 4 (631 aa).

The tract at residues methionine 1–proline 26 is disordered. The stretch at glutamate 153–lysine 183 forms a coiled coil. A run of 4 helical transmembrane segments spans residues tyrosine 187–valine 203, threonine 204–isoleucine 220, leucine 228–leucine 248, and leucine 343–isoleucine 363. The segment at tryptophan 523–aspartate 631 is disordered. A compositionally biased stretch (polar residues) spans isoleucine 571–aspartate 590.

It belongs to the TMCO4 family.

The protein resides in the membrane. The polypeptide is Transmembrane and coiled-coil domain-containing protein 4 (Tmco4) (Rattus norvegicus (Rat)).